The primary structure comprises 716 residues: Tensin-4 (716 aa).

The first 17 residues, 1 to 17, serve as a signal peptide directing secretion; it reads MSQVMSSPLLAGGPAVG. 4 disordered regions span residues 119 to 274, 301 to 322, 334 to 366, and 379 to 436; these read LPPG…VSML, QSSS…NLGP, VPSN…PSIT, and GFPE…RDMQ. Over residues 138–150 the composition is skewed to basic and acidic residues; sequence KKKEEPEALDIKY. Positions 197–206 are enriched in polar residues; sequence SSESLIFSGS. A compositionally biased stretch (pro residues) spans 214–228; it reads PAPPSAVPSSHPPTS. The residue at position 248 (Ser248) is a Phosphoserine. Residues 265-274 show a composition bias toward polar residues; that stretch reads PQLSSRVSML. Residues 402–419 show a composition bias toward polar residues; sequence ATSSSMPCPATRSHSQTL. Residues 449-556 form the SH2 domain; that stretch reads WFKPSISREQ…ALPCKLVIPQ (108 aa). Residues 583-704 form the PTB domain; the sequence is CHALYLSSVS…TLQPASQVIR (122 aa).

Belongs to the PTEN phosphatase protein family. As to quaternary structure, interacts (via SH2 domain) with Rho GTPase-activating protein DLC1 (via C-terminus); the interaction is independent of DLC1 tyrosine phosphorylation. Interacts with integrin ITGB1; the interaction displaces tensin TNS3 from the ITGB1 cytoplasmic tail and promotes ITGB1 stability. Interacts (via SH2 domain) with E3 ubiquitin-protein ligase CBL (phosphorylated on 'Tyr-782'); the interaction is enhanced in the presence of EGF and reduces interaction of CBL with EGFR. Interacts (via SH2 domain) with receptor tyrosine kinase MET (when phosphorylated); the interaction increases MET protein stability.

The protein resides in the cell junction. Its subcellular location is the focal adhesion. It localises to the cytoplasm. It is found in the cytoskeleton. Promotes EGF-induced cell migration by displacing tensin TNS3 from the cytoplasmic tail of integrin ITGB1 which results in dissociation of TNS3 from focal adhesions, disassembly of actin stress fibers and initiation of cell migration. Suppresses ligand-induced degradation of EGFR by reducing EGFR ubiquitination in the presence of EGF. Increases MET protein stability by inhibiting MET endocytosis and subsequent lysosomal degradation which leads to increased cell survival, proliferation and migration. In Bos taurus (Bovine), this protein is Tensin-4 (TNS4).